We begin with the raw amino-acid sequence, 300 residues long: Protoheme IX farnesyltransferase (300 aa).

The next 9 membrane-spanning stretches (helical) occupy residues 31 to 51 (VMSLVVFTGFSGMWLAPNSLH), 52 to 72 (PFISVIALICIAIGAGSAGAI), 92 to 112 (IVRGAIEADEALSFGLIMAFF), 123 to 145 (FLSALLLLFTIFYYICIYTMWLK), 152 to 172 (IVIGGAAGALPPVIGYASVSG), 179 to 199 (VILFLIIFIWTPPHSWALALF), 225 to 245 (ILIYSVLLFLTSLMPFFVGMS), 247 to 267 (IIYLVIAAVLGLVFLYYSISL), and 280 to 300 (FFAYSIFYLFFIFLLLDFCRV).

Belongs to the UbiA prenyltransferase family. Protoheme IX farnesyltransferase subfamily.

It is found in the cell inner membrane. The catalysed reaction is heme b + (2E,6E)-farnesyl diphosphate + H2O = Fe(II)-heme o + diphosphate. Its pathway is porphyrin-containing compound metabolism; heme O biosynthesis; heme O from protoheme: step 1/1. Functionally, converts heme B (protoheme IX) to heme O by substitution of the vinyl group on carbon 2 of heme B porphyrin ring with a hydroxyethyl farnesyl side group. This chain is Protoheme IX farnesyltransferase, found in Rickettsia bellii (strain OSU 85-389).